The following is an 845-amino-acid chain: Protein translocase subunit SecA (845 aa).

ATP contacts are provided by residues Gln-88, 106 to 110, and Asp-495; that span reads GEGKT. The tract at residues 804–838 is disordered; the sequence is SNRANRPQKKAKRQPIVKPDKPGRNDPCPCGSGKK. The segment covering 809–818 has biased composition (basic residues); that stretch reads RPQKKAKRQP. The Zn(2+) site is built by Cys-831, Cys-833, Cys-842, and Cys-843.

It belongs to the SecA family. As to quaternary structure, monomer and homodimer. Part of the essential Sec protein translocation apparatus which comprises SecA, SecYEG and auxiliary proteins SecDF. Other proteins may also be involved. The cofactor is Zn(2+).

The protein localises to the cell inner membrane. It is found in the cytoplasm. The catalysed reaction is ATP + H2O + cellular proteinSide 1 = ADP + phosphate + cellular proteinSide 2.. In terms of biological role, part of the Sec protein translocase complex. Interacts with the SecYEG preprotein conducting channel. Has a central role in coupling the hydrolysis of ATP to the transfer of proteins into and across the cell membrane, serving as an ATP-driven molecular motor driving the stepwise translocation of polypeptide chains across the membrane. In Halothermothrix orenii (strain H 168 / OCM 544 / DSM 9562), this protein is Protein translocase subunit SecA.